Here is a 345-residue protein sequence, read N- to C-terminus: Mannonate dehydratase 2 (345 aa).

Belongs to the mannonate dehydratase family. Fe(2+) is required as a cofactor. It depends on Mn(2+) as a cofactor.

The enzyme catalyses D-mannonate = 2-dehydro-3-deoxy-D-gluconate + H2O. Its pathway is carbohydrate metabolism; pentose and glucuronate interconversion. Catalyzes the dehydration of D-mannonate. This chain is Mannonate dehydratase 2 (uxuA2), found in Halalkalibacterium halodurans (strain ATCC BAA-125 / DSM 18197 / FERM 7344 / JCM 9153 / C-125) (Bacillus halodurans).